A 341-amino-acid polypeptide reads, in one-letter code: Putative [LysW]-lysine/[LysW]-ornithine hydrolase (341 aa).

Zn(2+) is bound at residue His-62. Asp-64 is an active-site residue. Asp-86 serves as a coordination point for Zn(2+). Glu-115 serves as the catalytic Proton acceptor. Zn(2+) contacts are provided by Glu-116, Glu-140, and His-309.

The protein belongs to the peptidase M20A family. LysK subfamily. Zn(2+) serves as cofactor. It depends on Co(2+) as a cofactor.

It is found in the cytoplasm. It carries out the reaction [amino-group carrier protein]-C-terminal-gamma-(L-lysyl)-L-glutamate + H2O = [amino-group carrier protein]-C-terminal-L-glutamate + L-lysine. The enzyme catalyses [amino-group carrier protein]-C-terminal-gamma-(L-ornithyl)-L-glutamate + H2O = [amino-group carrier protein]-C-terminal-L-glutamate + L-ornithine. Its pathway is amino-acid biosynthesis; L-lysine biosynthesis via AAA pathway; L-lysine from L-alpha-aminoadipate (Thermus route): step 5/5. It participates in amino-acid biosynthesis; L-arginine biosynthesis. Catalyzes the release of L-lysine from [LysW]-gamma-L-lysine and the release of L-ornithine from [LysW]-L-ornithine. The sequence is that of Putative [LysW]-lysine/[LysW]-ornithine hydrolase from Pyrobaculum aerophilum (strain ATCC 51768 / DSM 7523 / JCM 9630 / CIP 104966 / NBRC 100827 / IM2).